An 847-amino-acid chain; its full sequence is DNA mismatch repair protein MutS (847 aa).

Position 602–609 (602–609) interacts with ATP; the sequence is GPNMSGKS. Residues 788–807 are disordered; the sequence is EKREASLPASRTDSQKVSEQ. A compositionally biased stretch (polar residues) spans 796–807; the sequence is ASRTDSQKVSEQ.

This sequence belongs to the DNA mismatch repair MutS family.

This protein is involved in the repair of mismatches in DNA. It is possible that it carries out the mismatch recognition step. This protein has a weak ATPase activity. The polypeptide is DNA mismatch repair protein MutS (Streptococcus gordonii (strain Challis / ATCC 35105 / BCRC 15272 / CH1 / DL1 / V288)).